The sequence spans 76 residues: Dolichyl-diphosphooligosaccharide--protein glycosyltransferase subunit OST5 (76 aa).

2 helical membrane passes run 14–34 (FYPVCAFLFCVIGFAFFATFI) and 54–74 (ALIASMSLGLGLFFVLLAGGI).

It belongs to the OST5 family. As to quaternary structure, component of the oligosaccharyltransferase (OST) complex.

Its subcellular location is the membrane. Its function is as follows. Subunit of the oligosaccharyl transferase (OST) complex that catalyzes the initial transfer of a defined glycan (Glc(3)Man(9)GlcNAc(2) in eukaryotes) from the lipid carrier dolichol-pyrophosphate to an asparagine residue within an Asn-X-Ser/Thr consensus motif in nascent polypeptide chains, the first step in protein N-glycosylation. N-glycosylation occurs cotranslationally and the complex associates with the Sec61 complex at the channel-forming translocon complex that mediates protein translocation across the endoplasmic reticulum (ER). All subunits are required for a maximal enzyme activity. The chain is Dolichyl-diphosphooligosaccharide--protein glycosyltransferase subunit OST5 from Dictyostelium discoideum (Social amoeba).